The sequence spans 976 residues: Dibasic-processing endoprotease (976 aa).

Residues 1–17 (MLRKFILGLLLASQAVA) form the signal peptide. The N-linked (GlcNAc...) asparagine glycan is linked to asparagine 156. Residues 172-212 (AEEAQKAQDDKGDKKEDQKDDKKEGQEAQKEGDKEDNKGDD) show a composition bias toward basic and acidic residues. Residues 172–246 (AEEAQKAQDD…VQWKPVDESM (75 aa)) form a disordered region. Acidic residues predominate over residues 213-231 (KEDGEEDDDDDEDEDDDDA). A Peptidase S8 domain is found at 277–595 (QWYLHNVHKA…YGKLDASKIV (319 aa)). 2 N-linked (GlcNAc...) asparagine glycosylation sites follow: asparagine 291 and asparagine 299. Aspartate 311 serves as the catalytic Charge relay system. N-linked (GlcNAc...) asparagine glycosylation is present at asparagine 336. Active-site charge relay system residues include histidine 349 and serine 528. Residues 524 to 544 (HGGTSAAAPLAAGVFALALSV) traverse the membrane as a helical segment. A P/Homo B domain is found at 604–737 (VNNQTSFHSE…QLNVFGEQKD (134 aa)). Asparagine 606 carries N-linked (GlcNAc...) asparagine glycosylation. Residues 733–848 (GEQKDKREEN…SDSHTSWWPD (116 aa)) are disordered. The span at 734 to 830 (EQKDKREENK…EEKPEEKPVD (97 aa)) shows a compositional bias: basic and acidic residues. Residues 855-875 (AWLYGAVLLVGGFIAVIGIYA) traverse the membrane as a helical segment. Asparagine 886 is a glycosylation site (N-linked (GlcNAc...) asparagine). Residues 914-976 (PEDTHRRSGD…RDNDRQNLLG (63 aa)) are disordered. Basic and acidic residues-rich tracts occupy residues 915 to 928 (EDTHRRSGDNDRLY) and 940 to 976 (MFRISDEGEDAHDVEPELNRVSMEADKRDNDRQNLLG).

The protein belongs to the peptidase S8 family. Furin subfamily.

It is found in the membrane. The protein is Dibasic-processing endoprotease (XPR6) of Yarrowia lipolytica (strain CLIB 122 / E 150) (Yeast).